Reading from the N-terminus, the 105-residue chain is Large ribosomal subunit protein bL21 (105 aa).

Belongs to the bacterial ribosomal protein bL21 family. Part of the 50S ribosomal subunit. Contacts protein L20.

In terms of biological role, this protein binds to 23S rRNA in the presence of protein L20. The polypeptide is Large ribosomal subunit protein bL21 (Frankia casuarinae (strain DSM 45818 / CECT 9043 / HFP020203 / CcI3)).